We begin with the raw amino-acid sequence, 439 residues long: Glutamate-1-semialdehyde 2,1-aminomutase (439 aa).

Lys279 bears the N6-(pyridoxal phosphate)lysine mark.

It belongs to the class-III pyridoxal-phosphate-dependent aminotransferase family. HemL subfamily. In terms of assembly, homodimer. The cofactor is pyridoxal 5'-phosphate.

The protein resides in the cytoplasm. The catalysed reaction is (S)-4-amino-5-oxopentanoate = 5-aminolevulinate. The protein operates within porphyrin-containing compound metabolism; protoporphyrin-IX biosynthesis; 5-aminolevulinate from L-glutamyl-tRNA(Glu): step 2/2. The sequence is that of Glutamate-1-semialdehyde 2,1-aminomutase from Rhodopirellula baltica (strain DSM 10527 / NCIMB 13988 / SH1).